A 373-amino-acid polypeptide reads, in one-letter code: MKKDYYEILGLTKSASKDEIKKAYRTLAKTYHPDVNKETNAEEKFKEITEAYEILNDDVKREQYNQFGHAAFDPNAGGFGGQNPFTNAEGFSGFSDFSGFGSIFTDFFGGFGNSQRANPNRAQRGEDRHAVIKISFIDSVLGKEIVEPLEKFETCNTCNGSGAKSQSDIITCTQCSGMGEQIKITKTFLGQMQQNVICSKCNGIGKEIVEKCLICKGKTHTKTTKNITIKIPAGIQNGQTLRVENYGNAGLNGGSNGNLILSIKVSPHKHFVRKNNDIILRLPVSIKSVIGSEKVEVPTPYGFEIIKIDPNIKTGDELIIKNKGIITKYESGKMIVIFEIFIPKLTSFEKKEISTILEKNADKFYEKWIKEFE.

Residues 4-68 (DYYEILGLTK…VKREQYNQFG (65 aa)) form the J domain. The segment at 142-224 (GKEIVEPLEK…CKGKTHTKTT (83 aa)) adopts a CR-type zinc-finger fold. Zn(2+) is bound by residues cysteine 155, cysteine 158, cysteine 172, cysteine 175, cysteine 198, cysteine 201, cysteine 212, and cysteine 215. CXXCXGXG motif repeat units follow at residues 155–162 (CNTCNGSG), 172–179 (CTQCSGMG), 198–205 (CSKCNGIG), and 212–219 (CLICKGKT).

The protein belongs to the DnaJ family. As to quaternary structure, homodimer. The cofactor is Zn(2+).

Its subcellular location is the cytoplasm. Functionally, participates actively in the response to hyperosmotic and heat shock by preventing the aggregation of stress-denatured proteins and by disaggregating proteins, also in an autonomous, DnaK-independent fashion. Unfolded proteins bind initially to DnaJ; upon interaction with the DnaJ-bound protein, DnaK hydrolyzes its bound ATP, resulting in the formation of a stable complex. GrpE releases ADP from DnaK; ATP binding to DnaK triggers the release of the substrate protein, thus completing the reaction cycle. Several rounds of ATP-dependent interactions between DnaJ, DnaK and GrpE are required for fully efficient folding. Also involved, together with DnaK and GrpE, in the DNA replication of plasmids through activation of initiation proteins. This chain is Chaperone protein DnaJ, found in Mycoplasma mobile (strain ATCC 43663 / 163K / NCTC 11711) (Mesomycoplasma mobile).